The sequence spans 550 residues: Mycosin-2 (550 aa).

The first 33 residues, 1–33 (MASPLNRPGLRAAAASAALTLVALSANVPAAQA), serve as a signal peptide directing secretion. Positions 34–62 (IPPPSVDPAMVPADARPGPDQPMRRSNSC) are disordered. The Peptidase S8 domain maps to 79-490 (GFNLVNISKA…YGLVDPVAAL (412 aa)). Residues aspartate 103 and histidine 133 each act as charge relay system in the active site. The segment covering 168 to 190 (PPVTAAPAPPVEVPPPMPPPPPV) has biased composition (pro residues). Residues 168–236 (PPVTAAPAPP…PPPPPGAPDG (69 aa)) are disordered. The active-site Charge relay system is the serine 435. The chain crosses the membrane as a helical span at residues 524–544 (NIAIGFVGAVATGVLAMAIGA).

It belongs to the peptidase S8 family.

Its subcellular location is the cell membrane. The chain is Mycosin-2 from Mycobacterium tuberculosis (strain ATCC 25618 / H37Rv).